The chain runs to 129 residues: MAREPQRIRRRERKNITAGVAHVNASFNNTMITITDAQGNAIAWSSAGMMGFKGSRKSTPYAAQVAAEDAGKKAAEHGVRTLEVEVKGPGSGRESALRALQAVGFHITSIRDVTPIPHNGVRPSKRRRV.

This sequence belongs to the universal ribosomal protein uS11 family. Part of the 30S ribosomal subunit. Interacts with proteins S7 and S18. Binds to IF-3.

Functionally, located on the platform of the 30S subunit, it bridges several disparate RNA helices of the 16S rRNA. Forms part of the Shine-Dalgarno cleft in the 70S ribosome. This Rhizorhabdus wittichii (strain DSM 6014 / CCUG 31198 / JCM 15750 / NBRC 105917 / EY 4224 / RW1) (Sphingomonas wittichii) protein is Small ribosomal subunit protein uS11.